The following is a 1118-amino-acid chain: Cytospin-A (1118 aa).

Disordered regions lie at residues 1-50 (MKKA…AALS), 75-175 (KKSN…DNQI), 294-324 (SLSP…GSVE), and 359-391 (SSDD…NASE). Low complexity-rich tracts occupy residues 34 to 48 (APTG…AAAA), 80 to 90 (SSAAPSAPAPA), and 99 to 113 (KSST…RSTS). Positions 120 to 131 (SSTRERLRERTR) are enriched in basic and acidic residues. The span at 133 to 145 (NQSKKLPSVSQGA) shows a compositional bias: polar residues. Residues 158–171 (TATEGDIRMSKSKS) are compositionally biased toward basic and acidic residues. The stretch at 168–281 (KSKSDNQISD…LNALGFSLEQ (114 aa)) forms a coiled coil. Residues 294–304 (SLSPEITPGNQ) show a composition bias toward polar residues. A compositionally biased stretch (low complexity) spans 359-373 (SSDDALDAPSSSESE). Ser-385, Ser-386, and Ser-390 each carry phosphoserine. 2 coiled-coil regions span residues 395–450 (ACLT…MESL) and 488–808 (RYME…RGRV). Phosphoserine is present on residues Ser-869, Ser-882, and Ser-888. Residues 916-999 (EHLLRTSSTS…STRSRIREER (84 aa)) are disordered. The span at 947–957 (RSSEEMKRDIS) shows a compositional bias: basic and acidic residues. The span at 972–992 (TTSPQLSLSSSPTASVTPSTR) shows a compositional bias: low complexity. A Calponin-homology (CH) domain is found at 1012 to 1117 (GSKRNALLKW…YVTAIYKYFE (106 aa)).

The protein belongs to the cytospin-A family. In terms of assembly, may interact with both microtubules and actin cytoskeleton.

It localises to the cytoplasm. The protein resides in the cytoskeleton. It is found in the spindle. Its subcellular location is the cell junction. The protein localises to the gap junction. Functionally, involved in cytokinesis and spindle organization. May play a role in actin cytoskeleton organization and microtubule stabilization and hence required for proper cell adhesion and migration. In Rattus norvegicus (Rat), this protein is Cytospin-A (Specc1l).